The primary structure comprises 90 residues: Small ribosomal subunit protein uS15c (90 aa).

The protein belongs to the universal ribosomal protein uS15 family. In terms of assembly, part of the 30S ribosomal subunit.

It localises to the plastid. Its subcellular location is the chloroplast. The sequence is that of Small ribosomal subunit protein uS15c (rps15-A) from Oryza nivara (Indian wild rice).